A 294-amino-acid polypeptide reads, in one-letter code: 2,2',3-trihydroxybiphenyl dioxygenase (294 aa).

VOC domains lie at 7-120 and 144-264; these read GYLI…LYVE and GLGH…LGFG. Residues histidine 147, histidine 209, and glutamate 260 each coordinate Fe cation.

It belongs to the extradiol ring-cleavage dioxygenase family. Monomer. It depends on Fe(2+) as a cofactor.

Its pathway is xenobiotic degradation; dibenzo-p-dioxin degradation; 2-hydroxymuconate and catechol from dibenzo-p-dioxin: step 2/3. The protein operates within xenobiotic degradation; dibenzofuran degradation; 2-hydroxy-2,4-pentadienoate and salicylate from dibenzofuran: step 2/3. Responsible for meta-cleavage of the first aromatic ring of 2,2',3-trihydroxybiphenyl and 2,3-dihydroxybiphenyl. 2,2',3-trihydroxydiphenyl ether, catechol, 3-methylcatechol, and 4-methylcatechol are oxidized less efficiently and 3,4-dihydroxybiphenyl is oxidized considerably less efficiently. This chain is 2,2',3-trihydroxybiphenyl dioxygenase (dbfB), found in Sphingomonas paucimobilis (Pseudomonas paucimobilis).